The following is a 242-amino-acid chain: Glutamate transport ATP-binding protein GluA (242 aa).

In terms of domain architecture, ABC transporter spans isoleucine 2–leucine 236. Glycine 34–serine 41 contacts ATP.

This sequence belongs to the ABC transporter superfamily. The complex is composed of two ATP-binding proteins (GluA), two transmembrane proteins (GluC and GluD) and a solute-binding protein (GluB).

The protein resides in the cell membrane. It catalyses the reaction a polar amino acid(out) + ATP + H2O = a polar amino acid(in) + ADP + phosphate + H(+). The enzyme catalyses L-glutamate(out) + ATP + H2O = L-glutamate(in) + ADP + phosphate + H(+). In terms of biological role, part of the ABC transporter complex GluABCD involved in glutamate uptake. Probably responsible for energy coupling to the transport system. In Corynebacterium glutamicum (strain ATCC 13032 / DSM 20300 / JCM 1318 / BCRC 11384 / CCUG 27702 / LMG 3730 / NBRC 12168 / NCIMB 10025 / NRRL B-2784 / 534), this protein is Glutamate transport ATP-binding protein GluA.